Here is a 475-residue protein sequence, read N- to C-terminus: Probable proline--tRNA ligase, mitochondrial (475 aa).

The transit peptide at 1–29 (MEGLLTRCRTLSALAACSLRHCRYIIHKC) directs the protein to the mitochondrion.

The protein belongs to the class-II aminoacyl-tRNA synthetase family.

Its subcellular location is the mitochondrion matrix. It carries out the reaction tRNA(Pro) + L-proline + ATP = L-prolyl-tRNA(Pro) + AMP + diphosphate. Functionally, mitochondrial aminoacyl-tRNA synthetase that catalyzes the specific attachment of the proline amino acid (aa) to the homologous transfer RNA (tRNA), further participating in protein synthesis. The reaction occurs in a two steps: proline is first activated by ATP to form Pro-AMP and then transferred to the acceptor end of tRNA(Pro). This is Probable proline--tRNA ligase, mitochondrial (Pars2) from Mus musculus (Mouse).